The sequence spans 179 residues: ATP-dependent protease subunit HslV (179 aa).

The active site involves T7. 3 residues coordinate Na(+): G162, C165, and T168.

Belongs to the peptidase T1B family. HslV subfamily. A double ring-shaped homohexamer of HslV is capped on each side by a ring-shaped HslU homohexamer. The assembly of the HslU/HslV complex is dependent on binding of ATP.

It localises to the cytoplasm. It catalyses the reaction ATP-dependent cleavage of peptide bonds with broad specificity.. Allosterically activated by HslU binding. Protease subunit of a proteasome-like degradation complex believed to be a general protein degrading machinery. The protein is ATP-dependent protease subunit HslV of Bordetella pertussis (strain Tohama I / ATCC BAA-589 / NCTC 13251).